The following is a 509-amino-acid chain: Solute carrier family 2, facilitated glucose transporter member 4 (509 aa).

Topologically, residues Met-1–Thr-23 are cytoplasmic. The interval Gln-7–Gly-13 is interaction with SRFBP1. A Phosphoserine modification is found at Ser-10. A helical transmembrane segment spans residues Leu-24–Val-44. The Extracellular portion of the chain corresponds to Ile-45 to Leu-80. A glycan (N-linked (GlcNAc...) asparagine) is linked at Asn-57. The helical transmembrane segment at Trp-81 to Ile-101 threads the bilayer. The Cytoplasmic portion of the chain corresponds to Ile-102 to Arg-110. The helical transmembrane segment at Ala-111 to Ala-131 threads the bilayer. The Extracellular portion of the chain corresponds to Ala-132–Gly-141. A helical transmembrane segment spans residues Arg-142–Glu-162. Over Ile-163–Gly-170 the chain is Cytoplasmic. The chain crosses the membrane as a helical span at residues Ala-171–Gly-191. A D-glucose-binding site is contributed by Gln-177. The Extracellular segment spans residues Leu-192–Thr-200. A helical membrane pass occupies residues Leu-201–Pro-221. Residues Phe-222–Gln-286 lie on the Cytoplasmic side of the membrane. Cys-223 carries the S-palmitoyl cysteine lipid modification. Ser-274 carries the phosphoserine; by SGK1 modification. Residues Pro-287 to Phe-307 form a helical membrane-spanning segment. D-glucose contacts are provided by residues Gln-298 to Gln-299 and Asn-304. Over Tyr-308–Pro-322 the chain is Extracellular. The chain crosses the membrane as a helical span at residues Ala-323–Leu-343. Asn-333 lines the D-glucose pocket. At Val-344 to Leu-352 the chain is on the cytoplasmic side. A helical membrane pass occupies residues His-353–Leu-373. The Extracellular portion of the chain corresponds to Leu-374–Ser-384. A helical membrane pass occupies residues Ile-385 to Phe-405. Positions 396 and 404 each coordinate D-glucose. The Cytoplasmic portion of the chain corresponds to Ile-406–Arg-416. The helical transmembrane segment at Pro-417 to Gly-437 threads the bilayer. The Extracellular segment spans residues Phe-438–Ala-444. A helical transmembrane segment spans residues Met-445–Phe-465. At Leu-466 to Asn-508 the chain is on the cytoplasmic side. At Thr-486 the chain carries Phosphothreonine. Position 488 is a phosphoserine (Ser-488). A Dileucine internalization motif motif is present at residues Leu-489–Leu-490.

The protein belongs to the major facilitator superfamily. Sugar transporter (TC 2.A.1.1) family. Glucose transporter subfamily. Binds to DAXX. Interacts via its N-terminus with SRFBP1. Interacts with NDUFA9. Interacts with TRARG1; the interaction is required for proper SLC2A4 recycling after insulin stimulation. Post-translationally, sumoylated. In terms of processing, palmitoylated. Palmitoylation by ZDHHC7 controls the insulin-dependent translocation of GLUT4 to the plasma membrane. In terms of tissue distribution, expressed in skeletal and cardiac muscles. Expressed in brown and white adipose tissues.

It localises to the cell membrane. The protein resides in the endomembrane system. Its subcellular location is the cytoplasm. The protein localises to the perinuclear region. It catalyses the reaction D-glucose(out) = D-glucose(in). In terms of biological role, insulin-regulated facilitative glucose transporter, which plays a key role in removal of glucose from circulation. Response to insulin is regulated by its intracellular localization: in the absence of insulin, it is efficiently retained intracellularly within storage compartments in muscle and fat cells. Upon insulin stimulation, translocates from these compartments to the cell surface where it transports glucose from the extracellular milieu into the cell. This is Solute carrier family 2, facilitated glucose transporter member 4 from Mus musculus (Mouse).